Here is a 262-residue protein sequence, read N- to C-terminus: Hydroxyethylthiazole kinase (262 aa).

Met-50 contacts substrate. Residues Arg-125 and Thr-171 each contribute to the ATP site. Gly-198 is a substrate binding site.

The protein belongs to the Thz kinase family. Mg(2+) serves as cofactor.

It catalyses the reaction 5-(2-hydroxyethyl)-4-methylthiazole + ATP = 4-methyl-5-(2-phosphooxyethyl)-thiazole + ADP + H(+). The protein operates within cofactor biosynthesis; thiamine diphosphate biosynthesis; 4-methyl-5-(2-phosphoethyl)-thiazole from 5-(2-hydroxyethyl)-4-methylthiazole: step 1/1. In terms of biological role, catalyzes the phosphorylation of the hydroxyl group of 4-methyl-5-beta-hydroxyethylthiazole (THZ). This Escherichia fergusonii (strain ATCC 35469 / DSM 13698 / CCUG 18766 / IAM 14443 / JCM 21226 / LMG 7866 / NBRC 102419 / NCTC 12128 / CDC 0568-73) protein is Hydroxyethylthiazole kinase.